Reading from the N-terminus, the 637-residue chain is tRNA uridine 5-carboxymethylaminomethyl modification enzyme MnmG (637 aa).

14–19 (GAGHAG) contacts FAD. 279–293 (GPRYCPSIEDKVVRF) contacts NAD(+).

It belongs to the MnmG family. In terms of assembly, homodimer. Heterotetramer of two MnmE and two MnmG subunits. The cofactor is FAD.

It localises to the cytoplasm. NAD-binding protein involved in the addition of a carboxymethylaminomethyl (cmnm) group at the wobble position (U34) of certain tRNAs, forming tRNA-cmnm(5)s(2)U34. The chain is tRNA uridine 5-carboxymethylaminomethyl modification enzyme MnmG from Desulfitobacterium hafniense (strain Y51).